The primary structure comprises 599 residues: MFNKFNTKPLWEVSKTLSSVAQGFEPADMVIINSRLINVCTREVIENTDVAISCGRIALVGDAKHCIGESTEVIDAKGQYIAPGFLDGHIHVESSMLSVSEYARSVVPHGTVGIYMDPHEICNVLGLNGVRYMIEDGKGTPLKNMVTTPSCVPAVPGFEDTGAAVGPEDVRETMKWDEIVGLGEMMNFPGILYSTDHAHGVVGETLKASKTVTGHYSLPETGKGLNGYIASGVRCCHESTRAEDALAKMRLGMYTMFREGSAWHDLKEVSKAITGNKVDSRFAVLISDDTHPHTLLKDGHLDHIIKRAIEEGIEPLTAIQMVTINCAQCFQMDHELGSITPGKCADIVLIEDLKDVKITKVIIDGNLVAKDGVLTTSIAKYDYPENAMHSMHIRDKITPASFNIMAQNKEKVTARVIEIIPERVGTYERHIELNVKDDKVQCDPSKDVLKAVVFERHHETGKAGYGFVKGFGIKRGAMAATVAHDAHNLLVIGTNDEDMALAANTLIECGGGMVAVQDGKVLGLVPLPIAGLMSNKPLEEMAEMVEKLDSAWKEIGCDIVSPFMTMALIPLACLPELRLTNRGLVDCNKFEFVSLFVEE.

The protein belongs to the metallo-dependent hydrolases superfamily. Adenine deaminase family. The cofactor is Mn(2+).

The enzyme catalyses adenine + H2O + H(+) = hypoxanthine + NH4(+). In Clostridium botulinum (strain Loch Maree / Type A3), this protein is Adenine deaminase.